The following is a 534-amino-acid chain: CTP synthase (534 aa).

The amidoligase domain stretch occupies residues 1 to 265 (MKYIVVTGGV…TTRLMKHLKL (265 aa)). Residue Ser12 participates in CTP binding. Ser12 is a binding site for UTP. Position 13–18 (13–18 (GLGKGI)) interacts with ATP. Tyr53 is an L-glutamine binding site. Asp70 is an ATP binding site. 2 residues coordinate Mg(2+): Asp70 and Glu140. CTP contacts are provided by residues 147-149 (DIE), 186-191 (KTKPSQ), and Lys222. UTP-binding positions include 186-191 (KTKPSQ) and Lys222. Positions 289–530 (KLAIVGKYTN…VRAMCKYNKE (242 aa)) constitute a Glutamine amidotransferase type-1 domain. Gly352 contributes to the L-glutamine binding site. Cys379 acts as the Nucleophile; for glutamine hydrolysis in catalysis. L-glutamine is bound by residues 380–383 (LGMQ), Glu403, and Arg460. Active-site residues include His503 and Glu505.

This sequence belongs to the CTP synthase family. As to quaternary structure, homotetramer.

The catalysed reaction is UTP + L-glutamine + ATP + H2O = CTP + L-glutamate + ADP + phosphate + 2 H(+). It carries out the reaction L-glutamine + H2O = L-glutamate + NH4(+). It catalyses the reaction UTP + NH4(+) + ATP = CTP + ADP + phosphate + 2 H(+). Its pathway is pyrimidine metabolism; CTP biosynthesis via de novo pathway; CTP from UDP: step 2/2. With respect to regulation, allosterically activated by GTP, when glutamine is the substrate; GTP has no effect on the reaction when ammonia is the substrate. The allosteric effector GTP functions by stabilizing the protein conformation that binds the tetrahedral intermediate(s) formed during glutamine hydrolysis. Inhibited by the product CTP, via allosteric rather than competitive inhibition. In terms of biological role, catalyzes the ATP-dependent amination of UTP to CTP with either L-glutamine or ammonia as the source of nitrogen. Regulates intracellular CTP levels through interactions with the four ribonucleotide triphosphates. This Methanosarcina acetivorans (strain ATCC 35395 / DSM 2834 / JCM 12185 / C2A) protein is CTP synthase.